A 460-amino-acid chain; its full sequence is Ammonium transporter Rh type B (460 aa).

Residues Met-1–Ile-10 lie on the Cytoplasmic side of the membrane. Residues Lys-11–Val-31 traverse the membrane as a helical segment. The Extracellular portion of the chain corresponds to Arg-32–Tyr-62. A glycan (N-linked (GlcNAc...) asparagine) is linked at Asn-48. A helical transmembrane segment spans residues Pro-63–Leu-83. Topologically, residues Lys-84–Gly-87 are cytoplasmic. A helical transmembrane segment spans residues Phe-88–Ile-108. Topologically, residues Gln-109–Glu-125 are extracellular. The chain crosses the membrane as a helical span at residues Ser-126–Gly-146. The Cytoplasmic portion of the chain corresponds to Lys-147–Pro-150. The chain crosses the membrane as a helical span at residues Val-151–Ile-171. Residues Leu-172 to Asp-179 lie on the Extracellular side of the membrane. Residues Ala-180–Tyr-202 traverse the membrane as a helical segment. Over Arg-203–Asp-220 the chain is Cytoplasmic. The helical transmembrane segment at Leu-221–Ile-241 threads the bilayer. Topologically, residues Thr-242–Val-252 are extracellular. The helical transmembrane segment at Met-253–Leu-273 threads the bilayer. Residues Asn-274–His-283 lie on the Cytoplasmic side of the membrane. A helical membrane pass occupies residues Ile-284 to Thr-304. Pro-305 is a topological domain (extracellular). A helical transmembrane segment spans residues Phe-306 to Leu-326. Residues Thr-327–Gly-347 lie on the Cytoplasmic side of the membrane. A helical transmembrane segment spans residues Met-348–Ile-368. The Extracellular segment spans residues Tyr-369 to Gln-394. The helical transmembrane segment at Phe-395 to Ile-415 threads the bilayer. Residues Leu-416–Ala-460 lie on the Cytoplasmic side of the membrane.

The protein belongs to the ammonium transporter (TC 2.A.49) family. Rh subfamily.

The protein localises to the basolateral cell membrane. It localises to the cytoplasmic vesicle membrane. In terms of biological role, functions as a specific ammonium transporter. The chain is Ammonium transporter Rh type B (rhbg) from Xenopus tropicalis (Western clawed frog).